Here is a 349-residue protein sequence, read N- to C-terminus: Hydroxymethylglutaryl-CoA synthase (349 aa).

2 residues coordinate (3S)-3-hydroxy-3-methylglutaryl-CoA: aspartate 29 and alanine 30. The active-site Proton donor/acceptor is glutamate 81. 2 residues coordinate (3S)-3-hydroxy-3-methylglutaryl-CoA: cysteine 113 and threonine 154. Cysteine 113 serves as the catalytic Acyl-thioester intermediate. A CoA-binding site is contributed by arginine 202. (3S)-3-hydroxy-3-methylglutaryl-CoA contacts are provided by threonine 204 and histidine 237. Histidine 237 serves as the catalytic Proton donor/acceptor. Position 242 (lysine 242) interacts with CoA. Lysine 246, asparagine 269, and serine 299 together coordinate (3S)-3-hydroxy-3-methylglutaryl-CoA.

It belongs to the thiolase-like superfamily. Archaeal HMG-CoA synthase family. Interacts with acetoacetyl-CoA thiolase that catalyzes the precedent step in the pathway and with a DUF35 protein. The acetoacetyl-CoA thiolase/HMG-CoA synthase complex channels the intermediate via a fused CoA-binding site, which allows for efficient coupling of the endergonic thiolase reaction with the exergonic HMGCS reaction.

The enzyme catalyses acetoacetyl-CoA + acetyl-CoA + H2O = (3S)-3-hydroxy-3-methylglutaryl-CoA + CoA + H(+). It participates in metabolic intermediate biosynthesis; (R)-mevalonate biosynthesis; (R)-mevalonate from acetyl-CoA: step 2/3. Its function is as follows. Catalyzes the condensation of acetyl-CoA with acetoacetyl-CoA to form 3-hydroxy-3-methylglutaryl-CoA (HMG-CoA). Functions in the mevalonate (MVA) pathway leading to isopentenyl diphosphate (IPP), a key precursor for the biosynthesis of isoprenoid compounds that are building blocks of archaeal membrane lipids. In Methanosarcina acetivorans (strain ATCC 35395 / DSM 2834 / JCM 12185 / C2A), this protein is Hydroxymethylglutaryl-CoA synthase.